A 634-amino-acid chain; its full sequence is MSLVPATNYIYTPLNQLKGGTIVNVYGVVKFFKPPYLSKGTDYCSVVTIVDQTNVKLTCLLFSGNYEALPIIYKNGDIVRFHRLKIQVYKKETQGITSSGFASLTFEGTLGAPIIPRTSSKYFNFTTEDHKMVEALRVWASTHMSPSWTLLKLCDVQPMQYFDLTCQLLGKAEVDGASFLLKVWDGTRTPFPSWRVLIQDLVLEGDLSHIHRLQNLTIDILVYDNHVHVARSLKVGSFLRIYSLHTKLQSMNSENQTMLSLEFHLHGGTSYGRGIRVLPESNSDVDQLKKDLESANLTANQHSDVICQSEPDDSFPSSGSVSLYEVERCQQLSATILTDHQYLERTPLCAILKQKAPQQYRIRAKLRSYKPRRLFQSVKLHCPKCHLLQEVPHEGDLDIIFQDGATKTPDVKLQNTSLYDSKIWTTKNQKGRKVAVHFVKNNGILPLSNECLLLIEGGTLSEICKLSNKFNSVIPVRSGHEDLELLDLSAPFLIQGTIHHYGCKQCSSLRSIQNLNSLVDKTSWIPSSVAEALGIVPLQYVFVMTFTLDDGTGVLEAYLMDSDKFFQIPASEVLMDDDLQKSVDMIMDMFCPPGIKIDAYPWLECFIKSYNVTNGTDNQICYQIFDTTVAEDVI.

DNA-binding regions lie at residues 33 to 48 (KPPY…SVVT) and 270 to 273 (SYGR).

It belongs to the telombin family. As to quaternary structure, homodimer or homooligomer. Component of the shelterin complex (telosome) composed of TERF1, TERF2, TINF2, TERF2IP, ACD and POT1. Binds single-stranded telomeric DNA as a monomer. Associated component of the telomerase holoenzyme complex. Found in a complex with TERF1, TINF2 and TNKS1. Interacts with TNKS1. Forms heterodimers with ACD. Identified in a complex with ACD and single-stranded telomeric DNA. Ubiquitous.

It localises to the nucleus. Its subcellular location is the chromosome. The protein localises to the telomere. In terms of biological role, component of the telomerase ribonucleoprotein (RNP) complex that is essential for the replication of chromosome termini. Is a component of the double-stranded telomeric DNA-binding TRF1 complex which is involved in the regulation of telomere length by cis-inhibition of telomerase. Also acts as a single-stranded telomeric DNA-binding protein and thus may act as a downstream effector of the TRF1 complex and may transduce information about telomere maintenance and/or length to the telomere terminus. Component of the shelterin complex (telosome) that is involved in the regulation of telomere length and protection. Shelterin associates with arrays of double-stranded TTAGGG repeats added by telomerase and protects chromosome ends; without its protective activity, telomeres are no longer hidden from the DNA damage surveillance and chromosome ends are inappropriately processed by DNA repair pathways. Binds to two or more telomeric single-stranded 5'-TTAGGG-3' repeats (G-strand) and with high specificity to a minimal telomeric single-stranded 5'-TAGGGTTAG-3' sequence. Binds telomeric single-stranded sequences internally or at proximity of a 3'-end. Its activity is TERT dependent but it does not increase TERT activity by itself. In contrast, the ACD-POT1 heterodimer enhances telomere elongation by increasing telomerase processivity. The polypeptide is Protection of telomeres protein 1 (POT1) (Homo sapiens (Human)).